The primary structure comprises 473 residues: MATSDSIVDDRKQLHVATFPWLAFGHILPYLQLSKLIAEKGHKVSFLSTTRNIQRLSSHISPLINVVQLTLPRVQELPEDAEATTDVHPEDIPYLKKASDGLQPEVTRFLEQHSPDWIIYDYTHYWLPSIAASLGISRAHFSVTTPWAIAYMGPSADAMINGSDGRTTVEDLTTPPKWFPFPTKVCWRKHDLARLVPYKAPGISDGYRMGLVLKGSDCLLSKCYHEFGTQWLPLLETLHQVPVVPVGLLPPEVPGDEKDETWVSIKKWLDGKQKGSVVYVALGSEVLVSQTEVVELALGLELSGLPFVWAYRKPKGPAKSDSVELPDGFVERTRDRGLVWTSWAPQLRILSHESVCGFLTHCGSGSIVEGLMFGHPLIMLPIFGDQPLNARLLEDKQVGIEIPRNEEDGCLTKESVARSLRSVVVEKEGEIYKANARELSKIYNDTKVEKEYVSQFVDYLEKNTRAVAIDHES.

Histidine 26 acts as the Proton acceptor in catalysis. Histidine 26 contributes to the an anthocyanidin binding site. Aspartate 121 (charge relay) is an active-site residue. Positions 344, 346, 361, 366, and 369 each coordinate UDP-alpha-D-glucose. Glycine 384 contributes to the an anthocyanidin binding site. Aspartate 385 and glutamine 386 together coordinate UDP-alpha-D-glucose.

Belongs to the UDP-glycosyltransferase family.

It carries out the reaction steviolmonoside + UDP-alpha-D-glucose = steviolbioside + UDP + H(+). The catalysed reaction is rubusoside + UDP-alpha-D-glucose = stevioside + UDP + H(+). The enzyme catalyses stevioside + UDP-alpha-D-glucose = rebaudioside E + UDP + H(+). It catalyses the reaction rebaudioside A + UDP-alpha-D-glucose = rebaudioside D + UDP + H(+). Its function is as follows. Involved in the biosynthesis of steviol glycosides in leaves. Converts the mono-glycoside steviolmonoside to the bi-glycoside steviolbioside. Converts the bi-glycoside rubusoside to the tri-glycoside stevioside. Converts the tri-glycoside stevioside to the tetra-glycoside rebaudioside E. Converts the tetra-glycoside rebaudioside A to the penta-glycoside rebaudioside E. The protein is UDP-glycosyltransferase 91D2 of Stevia rebaudiana (Stevia).